We begin with the raw amino-acid sequence, 229 residues long: Uracil-DNA glycosylase (229 aa).

D70 (proton acceptor) is an active-site residue.

It belongs to the uracil-DNA glycosylase (UDG) superfamily. UNG family.

It localises to the cytoplasm. The enzyme catalyses Hydrolyzes single-stranded DNA or mismatched double-stranded DNA and polynucleotides, releasing free uracil.. Excises uracil residues from the DNA which can arise as a result of misincorporation of dUMP residues by DNA polymerase or due to deamination of cytosine. The sequence is that of Uracil-DNA glycosylase from Chlamydia abortus (strain DSM 27085 / S26/3) (Chlamydophila abortus).